Reading from the N-terminus, the 84-residue chain is Small ribosomal subunit protein bS16c (84 aa).

Belongs to the bacterial ribosomal protein bS16 family.

The protein resides in the plastid. It is found in the chloroplast. This chain is Small ribosomal subunit protein bS16c, found in Anthoceros angustus (Hornwort).